Here is a 100-residue protein sequence, read N- to C-terminus: Large ribosomal subunit protein bL28 (100 aa).

The protein belongs to the bacterial ribosomal protein bL28 family.

This is Large ribosomal subunit protein bL28 from Ehrlichia ruminantium (strain Gardel).